A 330-amino-acid chain; its full sequence is D-alanine--D-alanine ligase (330 aa).

The region spanning 122–323 is the ATP-grasp domain; it reads NRFLSGFGIR…MKEVLCTIIR (202 aa). 151–206 is an ATP binding site; it reads TARMGLPLFVKPNVGGSSIATTKVVEAAQLLPAIGQAFSEGEEVMIERLICGTEVT. Residues Asp277, Glu290, and Asn292 each coordinate Mg(2+).

The protein belongs to the D-alanine--D-alanine ligase family. Requires Mg(2+) as cofactor. Mn(2+) is required as a cofactor.

The protein resides in the cytoplasm. It catalyses the reaction 2 D-alanine + ATP = D-alanyl-D-alanine + ADP + phosphate + H(+). It participates in cell wall biogenesis; peptidoglycan biosynthesis. In terms of biological role, cell wall formation. This Porphyromonas gingivalis (strain ATCC 33277 / DSM 20709 / CIP 103683 / JCM 12257 / NCTC 11834 / 2561) protein is D-alanine--D-alanine ligase.